The following is a 279-amino-acid chain: Elongation factor Ts (279 aa).

The segment at T80 to V83 is involved in Mg(2+) ion dislocation from EF-Tu.

This sequence belongs to the EF-Ts family.

It localises to the cytoplasm. Functionally, associates with the EF-Tu.GDP complex and induces the exchange of GDP to GTP. It remains bound to the aminoacyl-tRNA.EF-Tu.GTP complex up to the GTP hydrolysis stage on the ribosome. The sequence is that of Elongation factor Ts (tsf) from Borreliella burgdorferi (strain ATCC 35210 / DSM 4680 / CIP 102532 / B31) (Borrelia burgdorferi).